The sequence spans 1377 residues: MGGPLTAAGGRGDGGAKAVEPLRPPPPPDPKTMARWYQLEALERAVRGNTLAFLETGSGKTLIAVMLLRAYAHRVRRPDSRRFAVFLVPTVVLVGQQARVVEQHTDLVVKQFCGEMGVDFWDAATWRSQLEDGEVLVMTPQILLDNLRHSFFRLQDIALLIFDECHHARGNTPYACIFKEFYHPQLNSSASDPLPRIFGMSASLIYSKDLNQHNYSKQISEIENLMNSKVYTVDSESALSEYIPFASTKIVHFDDSNISSELHANILSCLNRLTKKHIEALDRKLHGSSLENAKQRISKLHRTFVYCLYNLGVWLAAKAAEVQSYEENSLSFWGETLDKNVEGFIRNYSEEVHRELSCFLKNGHIGEKFPADSQDGILTPKVHCLIRTLLQYRHMQDLRCIVFVQRVITSIVLEPLLSSIHQMSGWNVKHMAGSRPGLLSQSRKNHTEIVESFRKGKVHIIIATQILEEGLDVPSCNLVIRFDPSATVCSFIQSRGRARMENSDYLLLVGRGDVEAHTNAKKFLASGQIMREESLRLGSISCQPLENTLCEDTYYRVESTPAFDIDKASGTCTLHLPKSSPVQTVNVEGEGSILKETVCLKACQELHAIGALTDSLLPELDVPCDEEPDIVVENKIEQPSYFPEEFVDNWRSFSRLGIYYCYKISLEGCPKTASPTDILLALKCDLGSDFTSSSFKLPGGQDNASVTMKYVGIIHLNQEQVIIARRFQTTILSFLIGDDHLEVSNGIKYFHEMQVPIGVVYLLLPLVSGRIDWCSMKFSSSPIYEANNKHMTHCHSCRDIDLLQTKDGPFCRCILKNSIVCTPHNNIFYVISGFLDLDANSRLPQHDGTVVTYKDYFKTRHGLTLTFENQPLLAGSKHVKVRNFLHNYYYKKEKEPGDRYSVELPPELCRIIMSPVSANNLHIFSYVPSIMFRIQCMLLSVKLKVQLGPTVQQFDVPVLKILEALTTKKCQEEFSQESLETLGDSFLKYVTTRHLFSEYRLQHEGILTKMKKNLISNAALCQLACSSNLVGYIHAEEFNPRDWIIPCLDYDERGNKKISFLAPNGMYSQRKMSIKSKRIADSVEALIGAYLSTAGEKAAFLLMKSLGMNIEFHTEIPVERKISMKAEEFIDVRSLEGMLGYKFNDSLLLLEALTHGSYQTSGPTSCYQRLEFLGDAILDHLFTEYYYSKYPDCTPELLTDLRSASVNNNCYAHAAVKSGLNKHILHSSSELHRKMSYYLGQSFTGPSYGWEAGIGLPKVLGDVIESIAGAIYLDSKCDKEVVWRSMKRLLEPLATPETIEPDPVKGLQEFCDRRSFKITYEKNHVDGVSSVIARVKAGETTYSATKSGPCKLAKKLASKAVLKDLIAGHKDTEAAAV.

Residues 1–15 (MGGPLTAAGGRGDGG) show a composition bias toward gly residues. The segment at 1-30 (MGGPLTAAGGRGDGGAKAVEPLRPPPPPDP) is disordered. Residues 41-222 (ALERAVRGNT…HNYSKQISEI (182 aa)) form the Helicase ATP-binding domain. 54 to 61 (LETGSGKT) is an ATP binding site. The short motif at 163-166 (DECH) is the DECH box element. Residues 388–561 (TLLQYRHMQD…DTYYRVESTP (174 aa)) enclose the Helicase C-terminal domain. Residues 534–626 (SLRLGSISCQ…LPELDVPCDE (93 aa)) enclose the Dicer dsRNA-binding fold domain. Residues 798-913 (RDIDLLQTKD…LPPELCRIIM (116 aa)) form the PAZ domain. RNase III domains lie at 940–1095 (SVKL…STAG) and 1132–1276 (VRSL…LDSK). Mg(2+)-binding residues include E1171, D1262, and E1265. The 66-residue stretch at 1302–1367 (DPVKGLQEFC…SKAVLKDLIA (66 aa)) folds into the DRBM domain.

The protein belongs to the helicase family. Dicer subfamily. May interact with ARGONAUTE1 or PINHEAD through their common PAZ domains. Mg(2+) is required as a cofactor. Requires Mn(2+) as cofactor.

The protein resides in the nucleus. Probably involved in the RNA silencing pathway. May cleave double-stranded RNA to produce short 21-24 nucleotides (nt) RNAs which target the selective destruction of complementary RNAs. The sequence is that of Endoribonuclease Dicer homolog 2b (DCL2B) from Oryza sativa subsp. japonica (Rice).